A 268-amino-acid polypeptide reads, in one-letter code: Probable histidine-binding protein (268 aa).

Positions 1-20 are cleaved as a signal peptide; the sequence is MNMKKWIAAALACSALALSA. Residue Cys21 is the site of N-palmitoyl cysteine attachment. A lipid anchor (S-diacylglycerol cysteine) is attached at Cys21.

This sequence belongs to the bacterial solute-binding protein 3 family.

It localises to the cell membrane. Functionally, involved in histidine transport. The sequence is that of Probable histidine-binding protein (hisJ) from Neisseria gonorrhoeae.